The sequence spans 212 residues: Ribosomal RNA large subunit methyltransferase E (212 aa).

Over residues 1-10 (MATCRRRRRG) the composition is skewed to basic residues. The interval 1–24 (MATCRRRRRGCNSQARRSRHESDP) is disordered. Residues Gly-66, Trp-68, Asp-86, Asp-102, and Asp-127 each contribute to the S-adenosyl-L-methionine site. Catalysis depends on Lys-167, which acts as the Proton acceptor.

Belongs to the class I-like SAM-binding methyltransferase superfamily. RNA methyltransferase RlmE family.

It is found in the cytoplasm. It carries out the reaction uridine(2552) in 23S rRNA + S-adenosyl-L-methionine = 2'-O-methyluridine(2552) in 23S rRNA + S-adenosyl-L-homocysteine + H(+). Functionally, specifically methylates the uridine in position 2552 of 23S rRNA at the 2'-O position of the ribose in the fully assembled 50S ribosomal subunit. This Halorhodospira halophila (strain DSM 244 / SL1) (Ectothiorhodospira halophila (strain DSM 244 / SL1)) protein is Ribosomal RNA large subunit methyltransferase E.